The primary structure comprises 220 residues: Adenylate kinase (220 aa).

G10 to T15 lines the ATP pocket. The segment at S30–I59 is NMP. Residues S31, R36, D57–I59, G83–R86, and Q90 contribute to the AMP site. Residues G124–D161 form an LID region. R125 serves as a coordination point for ATP. C128 and C131 together coordinate Zn(2+). V134–Y135 is an ATP binding site. Residues C148 and C151 each contribute to the Zn(2+) site. AMP-binding residues include R158 and R169. G197 provides a ligand contact to ATP.

Belongs to the adenylate kinase family. Monomer.

It localises to the cytoplasm. It carries out the reaction AMP + ATP = 2 ADP. The protein operates within purine metabolism; AMP biosynthesis via salvage pathway; AMP from ADP: step 1/1. In terms of biological role, catalyzes the reversible transfer of the terminal phosphate group between ATP and AMP. Plays an important role in cellular energy homeostasis and in adenine nucleotide metabolism. The polypeptide is Adenylate kinase (Pyrococcus horikoshii (strain ATCC 700860 / DSM 12428 / JCM 9974 / NBRC 100139 / OT-3)).